We begin with the raw amino-acid sequence, 127 residues long: UPF0102 protein Geob_1494 (127 aa).

This sequence belongs to the UPF0102 family.

This chain is UPF0102 protein Geob_1494, found in Geotalea daltonii (strain DSM 22248 / JCM 15807 / FRC-32) (Geobacter daltonii).